We begin with the raw amino-acid sequence, 683 residues long: Heat shock protein homolog ECU03_0520 (683 aa).

Belongs to the heat shock protein 70 family.

The protein localises to the cytoplasm. The sequence is that of Heat shock protein homolog ECU03_0520 from Encephalitozoon cuniculi (strain GB-M1) (Microsporidian parasite).